The following is a 913-amino-acid chain: Ubiquitin carboxyl-terminal hydrolase 20 (913 aa).

Residues Asp-6 to Ser-111 form a UBP-type zinc finger. 12 residues coordinate Zn(2+): Cys-8, His-10, Cys-30, Cys-33, Cys-43, Cys-48, Cys-53, His-60, His-64, His-70, Cys-83, and Cys-86. 3 positions are modified to phosphoserine: Ser-111, Ser-131, and Ser-133. One can recognise a USP domain in the interval Thr-144–Ser-684. The Nucleophile role is filled by Cys-153. The disordered stretch occupies residues Leu-256–Val-414. Residue Thr-257 is modified to Phosphothreonine. A compositionally biased stretch (basic and acidic residues) spans Glu-258–Ser-278. Ser-304 bears the Phosphoserine mark. Residues Glu-315 to Phe-331 are compositionally biased toward basic and acidic residues. Position 367 is a phosphoserine (Ser-367). Thr-376 carries the phosphothreonine modification. Residues Ser-407 and Ser-412 each carry the phosphoserine modification. The Proton acceptor role is filled by His-642. 2 consecutive DUSP domains span residues Glu-686–Cys-779 and Ala-788–Val-891.

Belongs to the peptidase C19 family. USP20/USP33 subfamily. As to quaternary structure, interacts with VHL, leading to its ubiquitination and subsequent degradation. Interacts with CCP110. Interacts with DIO2. Interacts with HIF1A. Interacts with ADRB2. Interacts with USP18. Ubiquitinated via a VHL-dependent pathway for proteasomal degradation.

It is found in the cytoplasm. It localises to the endoplasmic reticulum. The protein localises to the perinuclear region. Its subcellular location is the cytoskeleton. The protein resides in the microtubule organizing center. It is found in the centrosome. It carries out the reaction Thiol-dependent hydrolysis of ester, thioester, amide, peptide and isopeptide bonds formed by the C-terminal Gly of ubiquitin (a 76-residue protein attached to proteins as an intracellular targeting signal).. Its function is as follows. Deubiquitinating enzyme that plays a role in many cellular processes including autophagy, cellular antiviral response or membrane protein biogenesis. Attenuates TLR4-mediated NF-kappa-B signaling by cooperating with beta-arrestin-2/ARRB2 and inhibiting TRAF6 autoubiquitination. Promotes cellular antiviral responses by deconjugating 'Lys-33' and 'Lys-48'-linked ubiquitination of STING1 leading to its stabilization. Plays an essential role in autophagy induction by regulating the ULK1 stability through deubiquitination of ULK1. Acts as a positive regulator for NF-kappa-B activation by TNF-alpha through deubiquitinating 'Lys-48'-linked polyubiquitination of SQSTM1, leading to its increased stability. Acts as a regulator of G-protein coupled receptor (GPCR) signaling by mediating the deubiquitination beta-2 adrenergic receptor (ADRB2). Plays a central role in ADRB2 recycling and resensitization after prolonged agonist stimulation by constitutively binding ADRB2, mediating deubiquitination of ADRB2 and inhibiting lysosomal trafficking of ADRB2. Upon dissociation, it is probably transferred to the translocated beta-arrestins, possibly leading to beta-arrestins deubiquitination and disengagement from ADRB2. This suggests the existence of a dynamic exchange between the ADRB2 and beta-arrestins. Deubiquitinates DIO2, thereby regulating thyroid hormone regulation. Deubiquitinates HIF1A, leading to stabilize HIF1A and enhance HIF1A-mediated activity. Deubiquitinates MCL1, a pivotal member of the anti-apoptotic Bcl-2 protein family to regulate its stability. Within the endoplasmic reticulum, participates with USP33 in the rescue of post-translationally targeted membrane proteins that are inappropriately ubiquitinated by the cytosolic protein quality control in the cytosol. The polypeptide is Ubiquitin carboxyl-terminal hydrolase 20 (USP20) (Pongo abelii (Sumatran orangutan)).